The sequence spans 154 residues: Transcriptional repressor NrdR (154 aa).

The segment at 3–34 (CPHCHKNGSRVVDSRPSEDGSFIRRRRECIHC) is a zinc-finger region. One can recognise an ATP-cone domain in the interval 49 to 139 (LLVIKKDGTR…VYRQFKDVDA (91 aa)).

The protein belongs to the NrdR family. Requires Zn(2+) as cofactor.

Negatively regulates transcription of bacterial ribonucleotide reductase nrd genes and operons by binding to NrdR-boxes. The protein is Transcriptional repressor NrdR of Limosilactobacillus reuteri (strain DSM 20016) (Lactobacillus reuteri).